A 426-amino-acid polypeptide reads, in one-letter code: Transcription factor bHLH60 (426 aa).

Polar residues-rich tracts occupy residues 117-137 (QNGNISGETPTSSVPSNSSAN) and 148-172 (TDSSQRLISDSAIENQIPCPNQNNR). The interval 117 to 201 (QNGNISGETP…SSEENEKLPY (85 aa)) is disordered. The segment covering 191–200 (KSSEENEKLP) has biased composition (basic and acidic residues). The bHLH domain occupies 210-307 (QATDSHSLAE…DEIINHVQSL (98 aa)). The interval 367 to 398 (HRQLQQPPTQQWPFDGLNQPVWGREEDQAHGN) is disordered.

In terms of assembly, homodimer. In terms of tissue distribution, expressed constitutively in roots, leaves, stems, and flowers.

The protein resides in the nucleus. The polypeptide is Transcription factor bHLH60 (BHLH60) (Arabidopsis thaliana (Mouse-ear cress)).